Here is a 347-residue protein sequence, read N- to C-terminus: Two pore potassium channel a (347 aa).

The segment covering 1–11 has biased composition (polar residues); that stretch reads MDDNSIQQSLL. The interval 1–49 is disordered; sequence MDDNSIQQSLLADNPNVLQRKPSEGVNRFRRCRSTPSTDPLQGPPEKGS. The Cytoplasmic portion of the chain corresponds to 1-65; that stretch reads MDDNSIQQSL…LFKEMRPSFR (65 aa). The helical transmembrane segment at 66-86 threads the bilayer; that stretch reads LVGLLLFIYLLVGVLAFYAVM. The pore-forming intramembrane region spans 99-118; the sequence is DALYFCVVTMTTVGYGDLVP. The chain crosses the membrane as a helical span at residues 125–145; that stretch reads LLACAFVFMGMAVVALFVSKV. The Cytoplasmic portion of the chain corresponds to 146-183; the sequence is ADYLVEKQEVLFFKALHTNLKGGETKMLRAIETNRIKY. A helical membrane pass occupies residues 184–204; that stretch reads KFYTNALLLVLSIISGTVFLW. The pore-forming intramembrane region spans 213-232; sequence DSFYCVCATITTLGYGDKSF. Residues 239–259 traverse the membrane as a helical segment; that stretch reads VFAVFWIITSTIIMAQFFMYL. At 260–347 the chain is on the cytoplasmic side; it reads AEIYTERRQK…YDLTLAQSAQ (88 aa). EF-hand domains lie at 276-311 and 315-347; these read LTRK…ELGK and EEIS…QSAQ. Ca(2+) is bound by residues Asp-289, Asp-291, Asp-293, Gln-295, Glu-300, Asp-328, Asp-330, Ser-332, Thr-334, and Asp-339.

This sequence belongs to the two pore domain potassium channel (TC 1.A.1.7) family. Homodimer.

Its subcellular location is the vacuole membrane. Functionally, highly selective inward-rectifying potassium channel that is specifically located in the tonoplast of large vacuoles. Functions independently of the voltage difference across the membrane. The protein is Two pore potassium channel a (TPKA) of Oryza sativa subsp. japonica (Rice).